An 855-amino-acid polypeptide reads, in one-letter code: Potassium transporter 13 (855 aa).

The interval 1 to 67 is disordered; the sequence is MFHVEEESSG…EMDSDEEDDN (67 aa). The Cytoplasmic portion of the chain corresponds to 1–105; it reads MFHVEEESSG…EIEDTGIGKK (105 aa). Over residues 36-51 the composition is skewed to acidic residues; sequence EKDDYEVNEDYDDDGY. Residues 106–126 form a helical membrane-spanning segment; the sequence is LILALQTLGVVFGDIGTSPLY. Residues 127–142 are Extracellular-facing; it reads TFTVMFRRSPINDKED. Residues 143–163 form a helical membrane-spanning segment; the sequence is IIGALSLVIYTLILIPLVKYV. At 164–233 the chain is on the cytoplasmic side; the sequence is HFVLWANDDG…RLEASMALKK (70 aa). The chain crosses the membrane as a helical span at residues 234–254; it reads LLLILVLAGTAMVIADAVVTP. The Extracellular segment spans residues 255–268; it reads AMSVMSAIGGLKVG. The helical transmembrane segment at 269 to 289 threads the bilayer; the sequence is VGVIEQDQVVVISVSFLVILF. Topologically, residues 290–298 are cytoplasmic; sequence SVQKYGTSK. A helical membrane pass occupies residues 299 to 319; sequence LGLVLGPALLLWFFCLAGIGI. At 320-346 the chain is on the extracellular side; it reads YNLVKYDSSVFKAFNPAYIYFFFKRNS. The helical transmembrane segment at 347–367 threads the bilayer; that stretch reads VNAWYALGGCVLCATGSEAMF. Topologically, residues 368–379 are cytoplasmic; the sequence is ADLSYFSVHSIQ. A helical transmembrane segment spans residues 380 to 400; sequence LTFILLVLPCLLLGYLGQAAY. Residues 401-415 are Extracellular-facing; that stretch reads LSENFSAAGDAFFSS. N-linked (GlcNAc...) asparagine glycosylation is present at Asn-404. The chain crosses the membrane as a helical span at residues 416–436; the sequence is VPSSLFWPVFLISNVAALIAS. Residues 437–467 lie on the Cytoplasmic side of the membrane; sequence RAMTTATFTCIKQSIALGCFPRLKIIHTSKK. Residues 468-488 form a helical membrane-spanning segment; the sequence is FIGQIYIPVLNWSLLVVCLIV. The Extracellular portion of the chain corresponds to 489 to 503; the sequence is VCSTSNIFAIGNAYG. Residues 504 to 524 form a helical membrane-spanning segment; that stretch reads IAELGIMMTTTILVTLIMLLI. The Cytoplasmic segment spans residues 525–528; that stretch reads WQTN. A helical membrane pass occupies residues 529–549; the sequence is IIVVSMFAIVSLIVELVFFSS. Over 550–553 the chain is Extracellular; the sequence is VCSS. The helical transmembrane segment at 554-574 threads the bilayer; the sequence is VADGSWIILVFATIMFLIMFV. Residues 575–855 are Cytoplasmic-facing; sequence WNYGSKLKYE…LMQVGMTYMV (281 aa). Ser-766 is modified (phosphoserine).

It belongs to the HAK/KUP transporter (TC 2.A.72.3) family.

It is found in the cell membrane. In terms of biological role, probable potassium transporter. The polypeptide is Potassium transporter 13 (POT13) (Arabidopsis thaliana (Mouse-ear cress)).